The following is a 420-amino-acid chain: Phosphoribosylamine--glycine ligase (420 aa).

Residues K108–N314 form the ATP-grasp domain. Residue L134 to S195 participates in ATP binding. Residues E284 and N286 each contribute to the Mg(2+) site.

This sequence belongs to the GARS family. It depends on Mg(2+) as a cofactor. Mn(2+) serves as cofactor.

The enzyme catalyses 5-phospho-beta-D-ribosylamine + glycine + ATP = N(1)-(5-phospho-beta-D-ribosyl)glycinamide + ADP + phosphate + H(+). The protein operates within purine metabolism; IMP biosynthesis via de novo pathway; N(1)-(5-phospho-D-ribosyl)glycinamide from 5-phospho-alpha-D-ribose 1-diphosphate: step 2/2. This is Phosphoribosylamine--glycine ligase from Listeria innocua serovar 6a (strain ATCC BAA-680 / CLIP 11262).